The following is a 159-amino-acid chain: Dynein 18 kDa light chain, flagellar outer arm (159 aa).

EF-hand domains are found at residues 18-53 (EEMD…LGQN), 54-89 (PTEE…NKQM), and 129-159 (ELTV…ALLS). Ca(2+) is bound by residues aspartate 31, aspartate 33, serine 35, threonine 37, glutamate 42, aspartate 67, aspartate 69, serine 71, cysteine 73, and glutamate 78.

Consists of at least 3 heavy chains (alpha, beta and gamma), 2 intermediate chains and 8 light chains.

The protein localises to the cell projection. It is found in the cilium. The protein resides in the flagellum. Its function is as follows. May be involved in the calcium-mediated regulation of dynein motor function. Binds 1 mole of calcium. This is Dynein 18 kDa light chain, flagellar outer arm from Chlamydomonas reinhardtii (Chlamydomonas smithii).